A 992-amino-acid polypeptide reads, in one-letter code: Disks large-associated protein 4 (992 aa).

Residues 1–20 show a composition bias toward basic and acidic residues; sequence MKGLGDSRPRHLSDSLDPPH. Disordered stretches follow at residues 1–31 and 154–226; these read MKGL…DRNP and APSM…ASGL. Residues 162 to 171 are compositionally biased toward gly residues; that stretch reads GKVGGNGGKK. Positions 172-194 are enriched in basic and acidic residues; that stretch reads GVLEDGKGRRAKSKERAKAGEPK. The segment covering 199-208 has biased composition (polar residues); that stretch reads SNISGWWSSD. 2 positions are modified to phosphoserine: serine 206 and serine 207. An Omega-N-methylarginine modification is found at arginine 290. Disordered regions lie at residues 342–435, 527–665, 677–751, 763–798, and 915–992; these read TTLL…SWEE, SVSL…RKLS, VPKE…GPRQ, SYGD…AQPG, and TPEK…QTRL. Serine 377, serine 380, serine 384, serine 388, serine 405, serine 415, and serine 421 each carry phosphoserine. Polar residues predominate over residues 399–413; the sequence is LRATQQSLGEQSNPR. Positions 528–554 are enriched in low complexity; it reads VSLQSLSPPPSTGSLSNSRTLPSSSCL. Positions 576-591 are enriched in polar residues; it reads VTVQSSTESAQDTYLD. 6 positions are modified to phosphoserine: serine 580, serine 581, serine 609, serine 611, serine 665, and serine 744. The segment covering 600–620 has biased composition (low complexity); the sequence is TSQSGLSNSSDSLDSSTRPPS. A Phosphothreonine modification is found at threonine 915. 2 stretches are compositionally biased toward basic and acidic residues: residues 915–925 and 940–958; these read TPEKRKEEKKP and VSRD…EARK. Polar residues predominate over residues 969–978; the sequence is VRQNSATESA. A Phosphoserine modification is found at serine 973.

This sequence belongs to the SAPAP family. In terms of assembly, interacts with DLG1 and DLG4/PSD-95. In terms of tissue distribution, expressed in brain.

The protein localises to the membrane. Functionally, may play a role in the molecular organization of synapses and neuronal cell signaling. Could be an adapter protein linking ion channel to the subsynaptic cytoskeleton. May induce enrichment of PSD-95/SAP90 at the plasma membrane. The polypeptide is Disks large-associated protein 4 (Dlgap4) (Rattus norvegicus (Rat)).